Reading from the N-terminus, the 228-residue chain is Cytidylate kinase (228 aa).

Residue 10–18 participates in ATP binding; the sequence is GPSGSGKGT.

The protein belongs to the cytidylate kinase family. Type 1 subfamily.

It localises to the cytoplasm. The enzyme catalyses CMP + ATP = CDP + ADP. It catalyses the reaction dCMP + ATP = dCDP + ADP. This is Cytidylate kinase from Acinetobacter baumannii (strain AB0057).